We begin with the raw amino-acid sequence, 427 residues long: Glutamate-1-semialdehyde 2,1-aminomutase (427 aa).

At Lys265 the chain carries N6-(pyridoxal phosphate)lysine.

Belongs to the class-III pyridoxal-phosphate-dependent aminotransferase family. HemL subfamily. As to quaternary structure, homodimer. It depends on pyridoxal 5'-phosphate as a cofactor.

Its subcellular location is the cytoplasm. It carries out the reaction (S)-4-amino-5-oxopentanoate = 5-aminolevulinate. It participates in porphyrin-containing compound metabolism; protoporphyrin-IX biosynthesis; 5-aminolevulinate from L-glutamyl-tRNA(Glu): step 2/2. The chain is Glutamate-1-semialdehyde 2,1-aminomutase from Edwardsiella ictaluri (strain 93-146).